Reading from the N-terminus, the 154-residue chain is Large ribosomal subunit protein uL15 (154 aa).

The span at 1-13 (MKLNELRDHEGAT) shows a compositional bias: basic and acidic residues. The interval 1 to 44 (MKLNELRDHEGATKNRKRIGRGIGSGTGKTGGCGVKGQKSRSGV) is disordered. Positions 21–35 (RGIGSGTGKTGGCGV) are enriched in gly residues.

Belongs to the universal ribosomal protein uL15 family. In terms of assembly, part of the 50S ribosomal subunit.

Binds to the 23S rRNA. This chain is Large ribosomal subunit protein uL15, found in Bartonella bacilliformis (strain ATCC 35685 / KC583 / Herrer 020/F12,63).